The chain runs to 308 residues: Acetylglutamate kinase (308 aa).

Residues 86-87 (GG), arginine 108, and asparagine 201 contribute to the substrate site.

The protein belongs to the acetylglutamate kinase family. ArgB subfamily.

The protein localises to the cytoplasm. It catalyses the reaction N-acetyl-L-glutamate + ATP = N-acetyl-L-glutamyl 5-phosphate + ADP. Its pathway is amino-acid biosynthesis; L-arginine biosynthesis; N(2)-acetyl-L-ornithine from L-glutamate: step 2/4. In terms of biological role, catalyzes the ATP-dependent phosphorylation of N-acetyl-L-glutamate. This chain is Acetylglutamate kinase, found in Prochlorococcus marinus (strain MIT 9303).